A 64-amino-acid chain; its full sequence is MTKITIVKCPQCGTDVEWGEQSPHRPFCSKKCQMIDFGEWADEENAIPGAPDMSDSDGWSEEQY.

Residues Cys-9, Cys-12, Cys-28, and Cys-32 each contribute to the Zn(2+) site. Positions 42 to 64 are disordered; it reads DEENAIPGAPDMSDSDGWSEEQY. The segment covering 54–64 has biased composition (acidic residues); it reads SDSDGWSEEQY.

This sequence belongs to the DNA gyrase inhibitor YacG family. In terms of assembly, interacts with GyrB. The cofactor is Zn(2+).

In terms of biological role, inhibits all the catalytic activities of DNA gyrase by preventing its interaction with DNA. Acts by binding directly to the C-terminal domain of GyrB, which probably disrupts DNA binding by the gyrase. This is DNA gyrase inhibitor YacG from Vibrio vulnificus (strain YJ016).